Consider the following 211-residue polypeptide: Large ribosomal subunit protein uL3 (211 aa).

This sequence belongs to the universal ribosomal protein uL3 family. As to quaternary structure, part of the 50S ribosomal subunit. Forms a cluster with proteins L14 and L19.

Functionally, one of the primary rRNA binding proteins, it binds directly near the 3'-end of the 23S rRNA, where it nucleates assembly of the 50S subunit. The protein is Large ribosomal subunit protein uL3 of Citrifermentans bemidjiense (strain ATCC BAA-1014 / DSM 16622 / JCM 12645 / Bem) (Geobacter bemidjiensis).